The following is a 64-amino-acid chain: MSRKCEFCGKEPHVGNNVSHANNKTKRLWYPNLQTVRHMDKSGAVRRVKACTRCIRTGLVVKPA.

The protein belongs to the bacterial ribosomal protein bL28 family.

The chain is Large ribosomal subunit protein bL28 from Syntrophobacter fumaroxidans (strain DSM 10017 / MPOB).